The following is a 496-amino-acid chain: MFS transporter cpaT (496 aa).

The segment at 1 to 45 (MGHQEEPPRICKTPSGHEQGEGPAEKTSKPSTEEVGWDGPTDPAR) is disordered. Positions 18 to 32 (EQGEGPAEKTSKPST) are enriched in basic and acidic residues. The N-linked (GlcNAc...) asparagine glycan is linked to Asn-48. The chain crosses the membrane as a helical span at residues 58-78 (MGIISYLTFLTPLTSSIVAPA). N-linked (GlcNAc...) asparagine glycosylation is present at Asn-90. A run of 5 helical transmembrane segments spans residues 93–113 (LASF…LFLA), 130–150 (FIFT…ALLV), 154–174 (FAGI…ADMF), 180–200 (GVAM…GPIA), and 212–232 (WVFW…LFVL). Asn-252 carries an N-linked (GlcNAc...) asparagine glycan. The next 6 membrane-spanning stretches (helical) occupy residues 288–308 (VALF…LFTT), 325–345 (GLVY…FGAL), 367–387 (LPPL…YGWS), 395–415 (IMPI…LLPI), 427–449 (AASA…PLAG), and 463–483 (SLLG…YFYG).

This sequence belongs to the major facilitator superfamily.

It is found in the membrane. Functionally, MFS transporter; part of the gene cluster that mediates the biosynthesis of the fungal neurotoxin cyclopiazonic acid (CPA), a nanomolar inhibitor of Ca(2+)-ATPase with a unique pentacyclic indole tetramic acid scaffold. The protein is MFS transporter cpaT of Aspergillus oryzae (Yellow koji mold).